Here is a 354-residue protein sequence, read N- to C-terminus: Ornithine carbamoyltransferase, catabolic (354 aa).

Carbamoyl phosphate is bound by residues 67–70 (STRT), Gln94, Arg118, and 145–148 (HPTQ). Residues Asn177, Asp241, and 245–246 (SM) each bind L-ornithine. Carbamoyl phosphate contacts are provided by residues 284-285 (CL) and Arg329.

The protein belongs to the aspartate/ornithine carbamoyltransferase superfamily. OTCase family.

The protein localises to the cytoplasm. It carries out the reaction carbamoyl phosphate + L-ornithine = L-citrulline + phosphate + H(+). The protein operates within amino-acid degradation; L-arginine degradation via ADI pathway; carbamoyl phosphate from L-arginine: step 2/2. Reversibly catalyzes the transfer of the carbamoyl group from carbamoyl phosphate (CP) to the N(epsilon) atom of ornithine (ORN) to produce L-citrulline. This Lactococcus lactis subsp. lactis (strain IL1403) (Streptococcus lactis) protein is Ornithine carbamoyltransferase, catabolic (arcB).